The following is a 121-amino-acid chain: Neuromedin-B (121 aa).

The N-terminal stretch at 1 to 24 (MTLRAVGVRLLGGLLLFALLAAGA) is a signal peptide. Met56 carries the post-translational modification Methionine amide. A propeptide spanning residues 60 to 121 (SLEPPSPSLL…RRLLVQTLQK (62 aa)) is cleaved from the precursor. Residues 61-80 (LEPPSPSLLGTAPHTSLRDQ) form a disordered region.

The protein belongs to the bombesin/neuromedin-B/ranatensin family.

The protein localises to the secreted. It is found in the cell projection. The protein resides in the neuron projection. Stimulates smooth muscle contraction. Induces sighing by acting directly on the pre-Botzinger complex, a cluster of several thousand neurons in the ventrolateral medulla responsible for inspiration during respiratory activity. Contributes to the induction of sneezing following exposure to chemical irritants or allergens which causes release of NMB by nasal sensory neurons and activation of NMBR-expressing neurons in the sneeze-evoking region of the brainstem. These in turn activate neurons of the caudal ventral respiratory group, giving rise to the sneezing response. Contributes to induction of acute itch, possibly through activation of the NMBR receptor on dorsal root ganglion neurons. Increases expression of NMBR and steroidogenic mediators STAR, CYP11A1 and HSD3B1 in Leydig cells, induces secretion of testosterone by Leydig cells and also promotes Leydig cell proliferation. Plays a role in the innate immune response to influenza A virus infection by enhancing interferon alpha expression and reducing expression of IL6. Plays a role in CSF1-induced proliferation of osteoclast precursors by contributing to the positive regulation of the expression of the CSF1 receptor CSF1R. The sequence is that of Neuromedin-B (NMB) from Bos taurus (Bovine).